The primary structure comprises 311 residues: Manganese-dependent inorganic pyrophosphatase (311 aa).

Mn(2+) contacts are provided by His-10, Asp-14, Asp-16, Asp-75, His-97, and Asp-149.

This sequence belongs to the PPase class C family. In terms of assembly, homodimer. It depends on Mn(2+) as a cofactor.

It catalyses the reaction diphosphate + H2O = 2 phosphate + H(+). The chain is Manganese-dependent inorganic pyrophosphatase (ppaC) from Methanothrix thermoacetophila (strain DSM 6194 / JCM 14653 / NBRC 101360 / PT) (Methanosaeta thermophila).